A 660-amino-acid polypeptide reads, in one-letter code: Threonine--tRNA ligase (660 aa).

Positions 1-64 (MSHSVSLTFP…TEGRIEIVTR (64 aa)) constitute a TGS domain. Residues 245–547 (DHRRLGREMD…LLENFAGHMP (303 aa)) are catalytic. The Zn(2+) site is built by C341, H392, and H524.

The protein belongs to the class-II aminoacyl-tRNA synthetase family. Homodimer. Zn(2+) is required as a cofactor.

Its subcellular location is the cytoplasm. It catalyses the reaction tRNA(Thr) + L-threonine + ATP = L-threonyl-tRNA(Thr) + AMP + diphosphate + H(+). Its function is as follows. Catalyzes the attachment of threonine to tRNA(Thr) in a two-step reaction: L-threonine is first activated by ATP to form Thr-AMP and then transferred to the acceptor end of tRNA(Thr). Also edits incorrectly charged L-seryl-tRNA(Thr). The protein is Threonine--tRNA ligase of Sinorhizobium medicae (strain WSM419) (Ensifer medicae).